Here is a 222-residue protein sequence, read N- to C-terminus: Putative germin-like protein 3-2 (222 aa).

The first 22 residues, Met1–Ala22, serve as a signal peptide directing secretion. Cys32 and Cys50 are joined by a disulfide. Residues Asn55 and Asn71 are each glycosylated (N-linked (GlcNAc...) asparagine). One can recognise a Cupin type-1 domain in the interval Asp64–Glu212. Residues His112, His114, Glu119, and His158 each coordinate Mn(2+). Asn165 is a glycosylation site (N-linked (GlcNAc...) asparagine).

Belongs to the germin family. As to quaternary structure, oligomer (believed to be a pentamer but probably hexamer).

It localises to the secreted. Its subcellular location is the extracellular space. The protein resides in the apoplast. In terms of biological role, may play a role in plant defense. Probably has no oxalate oxidase activity even if the active site is conserved. This Oryza sativa subsp. japonica (Rice) protein is Putative germin-like protein 3-2.